The primary structure comprises 782 residues: Protein phosphatase 1 regulatory subunit 12C (782 aa).

Over residues 1 to 17 (MSGEDGPAAGPGAAAAA) the composition is skewed to low complexity. Residues 1 to 43 (MSGEDGPAAGPGAAAAAARERRREQLRQWGARAGAEPGPGERR) are disordered. S2 is modified (N-acetylserine). ANK repeat units lie at residues 100–129 (DGIS…TVNQ), 133–162 (EGWT…NIAA), 226–255 (TGAS…DPEL), and 259–288 (DGWT…GMDS). A coiled-coil region spans residues 297–329 (CDLADEEVLSLLEELARKQEDLRNQKEASQSRG). The tract at residues 316 to 686 (EDLRNQKEAS…EEPDGGFRTL (371 aa)) is disordered. A compositionally biased stretch (polar residues) spans 323–337 (EASQSRGQEPQAPSS). The span at 349–365 (SSREKISLQDLSKERRP) shows a compositional bias: basic and acidic residues. Positions 374–383 (QDEDEGEEGP) are enriched in acidic residues. Phosphoserine occurs at positions 399, 407, 427, 452, and 509. The segment covering 449-463 (RSASSSWLEGTSTQA) has biased composition (polar residues). Residues 537 to 546 (VRDEESESQR) are compositionally biased toward basic and acidic residues. Over residues 547-557 (KARSRLMRQSR) the composition is skewed to basic residues. Phosphothreonine; by CDC42BP and ROCK2 is present on T560. Residues 567–583 (DLKEAEKAAGKAPESEK) are compositionally biased toward basic and acidic residues. Phosphoserine occurs at positions 604 and 647. The span at 670–680 (PEPEPESEEPD) shows a compositional bias: acidic residues. The stretch at 681 to 782 (GGFRTLYAEL…LIRVISKLSK (102 aa)) forms a coiled coil.

As to quaternary structure, PP1 comprises a catalytic subunit, PPP1CA, PPP1CB or PPP1CC, and one or several targeting or regulatory subunits. PPP1R12C mediates binding to myosin. Interacts via its N-terminus with PPP1CB. Interacts with IL16. Interacts with the coiled-coil domain of MPRIP. Interacts with NOD2. In terms of processing, phosphorylation at Thr-560 is essential for its interaction with PPP1CB. As to expression, ubiquitously expressed. Highly expressed in heart.

It is found in the cytoplasm. The protein localises to the cytoskeleton. It localises to the stress fiber. Functionally, regulates myosin phosphatase activity. The chain is Protein phosphatase 1 regulatory subunit 12C from Homo sapiens (Human).